The chain runs to 529 residues: NAD(P)H-quinone oxidoreductase chain 4 1 (529 aa).

The next 13 membrane-spanning stretches (helical) occupy residues 4 to 24, 36 to 56, 91 to 111, 115 to 135, 137 to 157, 169 to 189, 209 to 229, 243 to 263, 277 to 297, 314 to 334, 335 to 355, 387 to 407, and 417 to 437; these read FPWLTTIILFPIVAALAIPFI, WYALAVGLIDFALIVYAFTNF, LILLTGFITTLAILAAWPVTL, LFYFLMLAMYGGQIAVFAVQD, LVFFLAWELELIPVYLLLAIW, FILYTAGSSLFILVAGLAMAF, GFQLLVYAGFLVAYGVKLPIV, TAPVHMLLAGILLKMGGYALI, FAPVLVILGVVNIIYAALTSY, IGFVLIGIASFTNLGMSGAVL, QMVSHGLIGASLFFLVGATYD, LALPGMSGFVAELMVFIGFAT, and VIVVFLAAVGVILTPIYLLSM.

It belongs to the complex I subunit 4 family.

The protein localises to the cellular thylakoid membrane. The enzyme catalyses a plastoquinone + NADH + (n+1) H(+)(in) = a plastoquinol + NAD(+) + n H(+)(out). The catalysed reaction is a plastoquinone + NADPH + (n+1) H(+)(in) = a plastoquinol + NADP(+) + n H(+)(out). NDH-1 shuttles electrons from NAD(P)H, via FMN and iron-sulfur (Fe-S) centers, to quinones in the respiratory chain. The immediate electron acceptor for the enzyme in this species is believed to be plastoquinone. Couples the redox reaction to proton translocation (for every two electrons transferred, four hydrogen ions are translocated across the cytoplasmic membrane), and thus conserves the redox energy in a proton gradient. This is NAD(P)H-quinone oxidoreductase chain 4 1 from Thermosynechococcus vestitus (strain NIES-2133 / IAM M-273 / BP-1).